A 221-amino-acid polypeptide reads, in one-letter code: Max dimerization protein 1 (221 aa).

The Nuclear localization signal signature appears at 21-49 (RREREAEHGYASMLPYNSKERDGLKRKSK). Disordered stretches follow at residues 28–67 (HGYA…EKNR) and 176–202 (DWSS…DEGY). The bHLH domain occupies 55-107 (NSRSTHNEMEKNRRAHLRLCLEKLKILVPLGPESNRHTTLSLLTRAKSHIKKL). Over residues 192-202 (SMQSICSDEGY) the composition is skewed to polar residues.

As to quaternary structure, efficient DNA binding requires dimerization with another bHLH protein. Binds DNA as a heterodimer with MAX.

It localises to the nucleus. Transcriptional repressor. MAD binds with MAX to form a sequence-specific DNA-binding protein complex which recognizes the core sequence 5'-CAC[GA]TG-3'. MAD thus antagonizes MYC transcriptional activity by competing for MAX. In Xenopus tropicalis (Western clawed frog), this protein is Max dimerization protein 1 (mxd1).